Here is an 88-residue protein sequence, read N- to C-terminus: Small ribosomal subunit protein uS17 (88 aa).

The protein belongs to the universal ribosomal protein uS17 family. As to quaternary structure, part of the 30S ribosomal subunit.

In terms of biological role, one of the primary rRNA binding proteins, it binds specifically to the 5'-end of 16S ribosomal RNA. In Stutzerimonas stutzeri (strain A1501) (Pseudomonas stutzeri), this protein is Small ribosomal subunit protein uS17.